Reading from the N-terminus, the 221-residue chain is Glutathione peroxidase (221 aa).

A signal peptide spans methionine 1–threonine 19. N-linked (GlcNAc...) asparagine glycosylation is present at asparagine 28. The active site involves cysteine 72. Residues asparagine 87 and asparagine 90 are each glycosylated (N-linked (GlcNAc...) asparagine).

Belongs to the glutathione peroxidase family. As to quaternary structure, homotetramer.

It localises to the secreted. The protein localises to the extracellular space. It carries out the reaction 2 glutathione + H2O2 = glutathione disulfide + 2 H2O. This chain is Glutathione peroxidase, found in Dirofilaria immitis (Canine heartworm).